Consider the following 180-residue polypeptide: 2-oxoglutarate dehydrogenase, mitochondrial (180 aa).

The residue at position 14 (Lys14) is an N6-succinyllysine. Ser40 carries the phosphoserine modification. Thiamine diphosphate is bound at residue Arg64.

Belongs to the alpha-ketoglutarate dehydrogenase family. As to quaternary structure, homodimer. The 2-oxoglutarate dehydrogenase complex is composed of OGDH (2-oxoglutarate dehydrogenase; E1), DLST (dihydrolipoamide succinyltransferase; E2) and DLD (dihydrolipoamide dehydrogenase; E3). It contains multiple copies of the three enzymatic components (E1, E2 and E3). In the nucleus, the 2-oxoglutarate dehydrogenase complex associates with KAT2A. Interacts with ABHD11; this interaction maintains the functional lipoylation of the 2-oxoglutarate dehydrogenase complex. It depends on thiamine diphosphate as a cofactor. The cofactor is Mg(2+).

Its subcellular location is the mitochondrion matrix. The protein resides in the nucleus. The catalysed reaction is N(6)-[(R)-lipoyl]-L-lysyl-[protein] + 2-oxoglutarate + H(+) = N(6)-[(R)-S(8)-succinyldihydrolipoyl]-L-lysyl-[protein] + CO2. With respect to regulation, calcium ions and ADP stimulate, whereas ATP and NADH reduce catalytic activity. Functionally, 2-oxoglutarate dehydrogenase (E1) component of the 2-oxoglutarate dehydrogenase complex (OGDHC), which mediates the decarboxylation of alpha-ketoglutarate. The 2-oxoglutarate dehydrogenase complex catalyzes the overall conversion of 2-oxoglutarate to succinyl-CoA and CO(2). The 2-oxoglutarate dehydrogenase complex is mainly active in the mitochondrion. A fraction of the 2-oxoglutarate dehydrogenase complex also localizes in the nucleus and is required for lysine succinylation of histones: associates with KAT2A on chromatin and provides succinyl-CoA to histone succinyltransferase KAT2A. The protein is 2-oxoglutarate dehydrogenase, mitochondrial of Mesocricetus auratus (Golden hamster).